The following is a 261-amino-acid chain: tRNA U34 carboxymethyltransferase (261 aa).

Residues Lys25, Trp39, Lys44, Gly63, 114 to 115 (VE), Tyr135, and Arg250 each bind carboxy-S-adenosyl-L-methionine.

The protein belongs to the class I-like SAM-binding methyltransferase superfamily. CmoB family. As to quaternary structure, homotetramer.

The enzyme catalyses carboxy-S-adenosyl-L-methionine + 5-hydroxyuridine(34) in tRNA = 5-carboxymethoxyuridine(34) in tRNA + S-adenosyl-L-homocysteine + H(+). Its function is as follows. Catalyzes carboxymethyl transfer from carboxy-S-adenosyl-L-methionine (Cx-SAM) to 5-hydroxyuridine (ho5U) to form 5-carboxymethoxyuridine (cmo5U) at position 34 in tRNAs. This chain is tRNA U34 carboxymethyltransferase, found in Helicobacter pylori (strain J99 / ATCC 700824) (Campylobacter pylori J99).